We begin with the raw amino-acid sequence, 388 residues long: MSGQALAQLEGVREDAGGFDLLAPDGTQYRVDVTDGVFDPHNPLLAGYVAGRRVVAFVGPTVDRIYGDRLRAYLDARLEPGSWSVHTIDSGERNKTLASVERVCAIAKASGLDRHGVMLAVGGGIVADIVGFAASMYARGIRYIKVNTTLVGQVDVGVGVKTGVNALNTKNMFGAYHPAHASLNDPALLATLPAREIRCGLAEIVKMAVILDAGLFEALEEHPDAFLRSSDGALETYVVRTSMRLMMEELCPNLREHDLARLVDFGHTFSPVIETAGGHRLEHGEAVAVDMALSAHLARLLGLADAESCRRVVTLLRRIGLPVFDPATCTPELMTQALHASWQRRGRELHLVVPTGIGKATFVERLEDVPAEVLRAALDALAREGRTS.

Residues 92-95, 124-128, 148-149, Lys161, Lys170, and 188-191 contribute to the NAD(+) site; these read ERNK, GIVAD, TT, and LLAT. Positions 203, 267, and 283 each coordinate Zn(2+).

The protein belongs to the sugar phosphate cyclases superfamily. EEVS-like family. NAD(+) serves as cofactor. It depends on Co(2+) as a cofactor. Zn(2+) is required as a cofactor.

It catalyses the reaction D-sedoheptulose 7-phosphate = 2-epi-5-epi-valiolone + phosphate. Catalyzes the cyclization of D-sedoheptulose 7-phosphate to 2-epi-5-epi-valiolone. Probably involved in acarbose biosynthesis. The sequence is that of 2-epi-5-epi-valiolone synthase from Streptomyces glaucescens.